The primary structure comprises 86 residues: RNA-binding protein Hfq (86 aa).

The Sm domain occupies 9–68 (DPYLNTLRKEKVGVSIYLVNGIKLQGTIESFDQFVILLKNTVSQMVYKHAISTVVPVRPI).

Belongs to the Hfq family. Homohexamer.

RNA chaperone that binds small regulatory RNA (sRNAs) and mRNAs to facilitate mRNA translational regulation in response to envelope stress, environmental stress and changes in metabolite concentrations. Also binds with high specificity to tRNAs. The polypeptide is RNA-binding protein Hfq (Pseudomonas savastanoi pv. phaseolicola (strain 1448A / Race 6) (Pseudomonas syringae pv. phaseolicola (strain 1448A / Race 6))).